The primary structure comprises 189 residues: Movement protein (189 aa).

The protein belongs to the tombusvirus/aureusvirus movement protein p22 family. In terms of assembly, interacts with host protein HFI22. In terms of processing, phosphorylated.

The protein resides in the host membrane. Its function is as follows. Transports viral genome to neighboring plant cells directly through plasmosdesmata, without any budding. The movement protein allows efficient cell to cell propagation, by bypassing the host cell wall barrier. The polypeptide is Movement protein (Capsicum annuum (Capsicum pepper)).